A 240-amino-acid polypeptide reads, in one-letter code: 2,3-bisphosphoglycerate-dependent phosphoglycerate mutase 2 (240 aa).

Substrate-binding positions include 8–15 (RHGQSEWN), 21–22 (TG), Arg-60, 87–90 (ERHY), Lys-98, 114–115 (RR), and 183–184 (GN). His-9 (tele-phosphohistidine intermediate) is an active-site residue. Glu-87 acts as the Proton donor/acceptor in catalysis.

The protein belongs to the phosphoglycerate mutase family. BPG-dependent PGAM subfamily.

It carries out the reaction (2R)-2-phosphoglycerate = (2R)-3-phosphoglycerate. It participates in carbohydrate degradation; glycolysis; pyruvate from D-glyceraldehyde 3-phosphate: step 3/5. Catalyzes the interconversion of 2-phosphoglycerate and 3-phosphoglycerate. This is 2,3-bisphosphoglycerate-dependent phosphoglycerate mutase 2 from Bacillus cereus (strain ATCC 10987 / NRS 248).